A 458-amino-acid polypeptide reads, in one-letter code: MSLWGGRFQDGSSAMFRTVNDSLPFDRVLASQDIRGSIAWARAIAKAGVLNQDEHQQLEEALKALLVKADAGELDFDASSEEDIHSFVEATLIEQLGDVARKLHTGRSRNDQVATDFRLWTREHVDLLVEDVEAVIASLVGNADVNQDVILPGYTHLQRAQPVRYPHWCLAYVEMLKRDLSRLHDLKARLNQCPLGSGALAGTTYPIDRQAIAEELGFDSPCINSLDAVSDRDYVLELLFVASTSMMHLSRMAEDLIFYNSGEAGFIQLGDAVTSGSSLMPQKKNPDALELMRGKCGRVFGSLQALLVTMKGLPLAYNKDMQEDKEGLFDATNQWHICLRIACEVVDSIKLDSERCAKAAREGYANATELADYLVDKGIPFRTAHDISGRVVLDALEKKKAIEELTIAELKVYSDVIEEDVYPVLQLEYLVNKRDILGGTGIKPVLEALANAKASFKK.

It belongs to the lyase 1 family. Argininosuccinate lyase subfamily.

Its subcellular location is the cytoplasm. It carries out the reaction 2-(N(omega)-L-arginino)succinate = fumarate + L-arginine. It participates in amino-acid biosynthesis; L-arginine biosynthesis; L-arginine from L-ornithine and carbamoyl phosphate: step 3/3. This chain is Argininosuccinate lyase, found in Pseudoalteromonas atlantica (strain T6c / ATCC BAA-1087).